Here is a 313-residue protein sequence, read N- to C-terminus: Homoserine kinase (313 aa).

92-102 (PPGRGLGSSGA) serves as a coordination point for ATP.

The protein belongs to the GHMP kinase family. Homoserine kinase subfamily.

The protein localises to the cytoplasm. It carries out the reaction L-homoserine + ATP = O-phospho-L-homoserine + ADP + H(+). It functions in the pathway amino-acid biosynthesis; L-threonine biosynthesis; L-threonine from L-aspartate: step 4/5. Its function is as follows. Catalyzes the ATP-dependent phosphorylation of L-homoserine to L-homoserine phosphate. This is Homoserine kinase from Aeropyrum pernix (strain ATCC 700893 / DSM 11879 / JCM 9820 / NBRC 100138 / K1).